The sequence spans 248 residues: Ras-like protein family member 11B (248 aa).

A small GTPase-like region spans residues 30–248; that stretch reads ASSRVIKIAV…SSKVRTATSV (219 aa). Residues 41 to 48, 88 to 99, and 153 to 156 each bind GTP; these read GGSGVGKT, DTPGVQINEQNL, and NKAD. Positions 206-228 are disordered; that stretch reads QNTGTSERRKNSIIPRPKSPNMQ.

The protein belongs to the small GTPase superfamily. Ras family.

The enzyme catalyses GTP + H2O = GDP + phosphate + H(+). This Xenopus laevis (African clawed frog) protein is Ras-like protein family member 11B.